The sequence spans 400 residues: Lysophospholipid transporter LplT (400 aa).

A run of 12 helical transmembrane segments spans residues Val19 to Ala39, Val53 to Ala73, Ala91 to Ile111, Leu139 to Ala159, Ile164 to Ile184, Ser195 to Trp213, Leu227 to Leu247, Tyr257 to Val277, Thr281 to Leu301, Ala304 to Val324, Asn352 to Ala372, and Val373 to Trp393.

This sequence belongs to the major facilitator superfamily. LplT (TC 2.A.1.42) family.

Its subcellular location is the cell inner membrane. In terms of biological role, catalyzes the facilitated diffusion of 2-acyl-glycero-3-phosphoethanolamine (2-acyl-GPE) into the cell. This Salmonella heidelberg (strain SL476) protein is Lysophospholipid transporter LplT.